The following is a 399-amino-acid chain: Carbamoyl phosphate synthase small chain (399 aa).

The segment at 1 to 209 (MEKFKLLKLG…SAINKKLHTS (209 aa)) is CPSase. The L-glutamine site is built by Ser-55, Gly-261, and Gly-263. In terms of domain architecture, Glutamine amidotransferase type-1 spans 213–399 (RIIVLDLGVK…VYIIYKSKSS (187 aa)). Cys-289 (nucleophile) is an active-site residue. 5 residues coordinate L-glutamine: Leu-290, Gln-293, Asn-329, Gly-331, and Phe-332. Residues His-372 and Glu-374 contribute to the active site.

This sequence belongs to the CarA family. Composed of two chains; the small (or glutamine) chain promotes the hydrolysis of glutamine to ammonia, which is used by the large (or ammonia) chain to synthesize carbamoyl phosphate. Tetramer of heterodimers (alpha,beta)4.

The protein localises to the plastid. It is found in the chloroplast. The enzyme catalyses hydrogencarbonate + L-glutamine + 2 ATP + H2O = carbamoyl phosphate + L-glutamate + 2 ADP + phosphate + 2 H(+). The catalysed reaction is L-glutamine + H2O = L-glutamate + NH4(+). Its pathway is amino-acid biosynthesis; L-arginine biosynthesis; carbamoyl phosphate from bicarbonate: step 1/1. It functions in the pathway pyrimidine metabolism; UMP biosynthesis via de novo pathway; (S)-dihydroorotate from bicarbonate: step 1/3. In terms of biological role, small subunit of the glutamine-dependent carbamoyl phosphate synthetase (CPSase). CPSase catalyzes the formation of carbamoyl phosphate from the ammonia moiety of glutamine, carbonate, and phosphate donated by ATP, constituting the first step of 2 biosynthetic pathways, one leading to arginine and/or urea and the other to pyrimidine nucleotides. The small subunit (glutamine amidotransferase) binds and cleaves glutamine to supply the large subunit with the substrate ammonia. The chain is Carbamoyl phosphate synthase small chain from Cyanidium caldarium (Red alga).